Reading from the N-terminus, the 98-residue chain is UPF0251 protein Sputcn32_0687 (98 aa).

This sequence belongs to the UPF0251 family.

The protein is UPF0251 protein Sputcn32_0687 of Shewanella putrefaciens (strain CN-32 / ATCC BAA-453).